The following is a 139-amino-acid chain: Protocatechuate 4,5-dioxygenase alpha chain (139 aa).

In terms of assembly, composed of two subunits (alpha and beta) in a 1:1 ratio. Fe(2+) serves as cofactor.

It carries out the reaction 3,4-dihydroxybenzoate + O2 = 4-carboxy-2-hydroxy-cis,cis-muconate 6-semialdehyde + H(+). In terms of biological role, responsible for the aromatic ring fission of protocatechuate. This chain is Protocatechuate 4,5-dioxygenase alpha chain (ligA), found in Sphingobium sp. (strain NBRC 103272 / SYK-6).